A 108-amino-acid chain; its full sequence is UPF0060 membrane protein RSKD131_0092 (108 aa).

The next 4 membrane-spanning stretches (helical) occupy residues 5–25 (LAAY…VWAW), 32–52 (ALWL…LALT), 62–82 (AVYG…VEGV), and 86–106 (RWDM…LWAP).

It belongs to the UPF0060 family.

It is found in the cell inner membrane. This is UPF0060 membrane protein RSKD131_0092 from Cereibacter sphaeroides (strain KD131 / KCTC 12085) (Rhodobacter sphaeroides).